The chain runs to 517 residues: MKPTKPEGPKKPNKSNEEAEELEGDNKEDLEGPKKPNKSNEEAEELEGDNKEDLEGPKKPNKSNEEAEELEGDKQKDKKDGIFVLNYDDEYEEDLEYDDEYEEDLEYDDEYEEDLEYDDEEYDDEYEEDLEGDNKPHKEDLEGDNKPHKEDLEGDNKPHKEDLEGDKQKEEEEKQKEEEEKLKDCPWHWFHQIYPKHWGCPHRKHRDRKSVPAKERELVPAQSTKRDTDPDSEASLKSNYAHLWVHCKLCSGFNYKKILKSKNNVCEQCGSHLKMHSSDRIDLMLDPKTWAPMHEGLLSLDPIEFHSEKDPYKDRVASYKRKTGLSEAIQTGRGYLKRIHLGIGLMDFQFMGGSMGSVVGERITRLVEYATNRVLPLILVCASGGARMQEGSLSLMQMAKISSALSDYQFNRTVFYVALLTSPTTGGVTASFGMLGDIILAEPNAYIAFAGKRVIEQTLNIEVPEGSQTAEYLFDKGLFDQIVPRNPLKGSLSELFNFHGFVTLNSQVINIYNYLYS.

Composition is skewed to basic and acidic residues over residues 1–17, 24–41, 48–65, and 72–81; these read MKPTKPEGPKKPNKSNE, GDNKEDLEGPKKPNKSNE, and GDKQKDKKDG. 2 disordered regions span residues 1-179 and 204-234; these read MKPT…KEEE and KHRDRKSVPAKERELVPAQSTKRDTDPDSEA. Residues 87–131 are compositionally biased toward acidic residues; the sequence is YDDEYEEDLEYDDEYEEDLEYDDEYEEDLEYDDEEYDDEYEEDLE. Composition is skewed to basic and acidic residues over residues 132 to 179 and 209 to 229; these read GDNK…KEEE and KSVPAKERELVPAQSTKRDTD. In terms of domain architecture, CoA carboxyltransferase N-terminal spans 243 to 514; sequence LWVHCKLCSG…NSQVINIYNY (272 aa). Zn(2+)-binding residues include Cys-247, Cys-250, Cys-266, and Cys-269. Residues 247–269 form a C4-type zinc finger; the sequence is CKLCSGFNYKKILKSKNNVCEQC.

The protein belongs to the AccD/PCCB family. In terms of assembly, acetyl-CoA carboxylase is a heterohexamer composed of biotin carboxyl carrier protein, biotin carboxylase and 2 subunits each of ACCase subunit alpha and ACCase plastid-coded subunit beta (accD). The cofactor is Zn(2+).

The protein resides in the plastid. It is found in the chloroplast stroma. The enzyme catalyses N(6)-carboxybiotinyl-L-lysyl-[protein] + acetyl-CoA = N(6)-biotinyl-L-lysyl-[protein] + malonyl-CoA. The protein operates within lipid metabolism; malonyl-CoA biosynthesis; malonyl-CoA from acetyl-CoA: step 1/1. Component of the acetyl coenzyme A carboxylase (ACC) complex. Biotin carboxylase (BC) catalyzes the carboxylation of biotin on its carrier protein (BCCP) and then the CO(2) group is transferred by the transcarboxylase to acetyl-CoA to form malonyl-CoA. The chain is Acetyl-coenzyme A carboxylase carboxyl transferase subunit beta, chloroplastic from Oenothera elata subsp. hookeri (Hooker's evening primrose).